Here is a 570-residue protein sequence, read N- to C-terminus: Small ribosomal subunit protein uS2c (570 aa).

The interval 1–306 (MLNKKPPYLI…IKLNPLSTPQ (306 aa)) is N-terminal extension. TRAM domains follow at residues 28–89 (KLIP…KLIK) and 104–169 (ALTP…VATV).

Belongs to the universal ribosomal protein uS2 family.

It is found in the plastid. The protein localises to the chloroplast. This Chlamydomonas reinhardtii (Chlamydomonas smithii) protein is Small ribosomal subunit protein uS2c (rps2-1).